We begin with the raw amino-acid sequence, 126 residues long: Holo-[acyl-carrier-protein] synthase (126 aa).

2 residues coordinate Mg(2+): Asp-9 and Glu-58.

It belongs to the P-Pant transferase superfamily. AcpS family. It depends on Mg(2+) as a cofactor.

It is found in the cytoplasm. It catalyses the reaction apo-[ACP] + CoA = holo-[ACP] + adenosine 3',5'-bisphosphate + H(+). Its function is as follows. Transfers the 4'-phosphopantetheine moiety from coenzyme A to a Ser of acyl-carrier-protein. The chain is Holo-[acyl-carrier-protein] synthase from Sodalis glossinidius (strain morsitans).